A 972-amino-acid chain; its full sequence is UPF0746 protein DDB_G0280785 (972 aa).

Basic and acidic residues predominate over residues 1–19 (MISNKRKEIENINRHHEKD). The tract at residues 1–30 (MISNKRKEIENINRHHEKDNDDDDSDGIDN) is disordered. Residues 44-78 (SGSTNYRELQIIAKSLGLASNGKKQLVYNRIEGYF) enclose the SAP domain.

Belongs to the UPF0746 family.

This Dictyostelium discoideum (Social amoeba) protein is UPF0746 protein DDB_G0280785.